Here is an 802-residue protein sequence, read N- to C-terminus: Penicillin G acylase (802 aa).

A signal peptide spans M1–E26. E177 is a Ca(2+) binding site. The propeptide at S235–G265 is spacer peptide. The active-site Nucleophile is S266. Ca(2+) is bound at residue D341.

This sequence belongs to the peptidase S45 family. As to quaternary structure, heterodimer of an alpha subunit and a beta subunit processed from the same precursor. The cofactor is Ca(2+).

It localises to the secreted. It carries out the reaction a penicillin + H2O = 6-aminopenicillanate + a carboxylate. In Rhizobium viscosum (Arthrobacter viscosus), this protein is Penicillin G acylase (pac).